The primary structure comprises 167 residues: Leukotoxin-activating lysine-acyltransferase LktC serotype A1 (167 aa).

Residues H22 and D91 contribute to the active site.

The protein belongs to the RTX toxin acyltransferase family.

It localises to the cytoplasm. It carries out the reaction a fatty acyl-[ACP] + L-lysyl-[protein] = N(6)-(fatty acyl)-L-lysyl-[protein] + holo-[ACP] + H(+). Functionally, involved in fatty acylation of the protoxin (LktA) at two internal lysine residues, thereby converting it to the active toxin. The chain is Leukotoxin-activating lysine-acyltransferase LktC serotype A1 (lktC) from Mannheimia haemolytica (Pasteurella haemolytica).